We begin with the raw amino-acid sequence, 80 residues long: Exodeoxyribonuclease 7 small subunit (80 aa).

It belongs to the XseB family. As to quaternary structure, heterooligomer composed of large and small subunits.

The protein localises to the cytoplasm. The enzyme catalyses Exonucleolytic cleavage in either 5'- to 3'- or 3'- to 5'-direction to yield nucleoside 5'-phosphates.. In terms of biological role, bidirectionally degrades single-stranded DNA into large acid-insoluble oligonucleotides, which are then degraded further into small acid-soluble oligonucleotides. The chain is Exodeoxyribonuclease 7 small subunit from Pseudomonas aeruginosa (strain LESB58).